The primary structure comprises 318 residues: Protein phosphatase 1 regulatory subunit 3C (318 aa).

The PP1-binding motif motif lies at 84–87 (RVVF). Positions 141 to 263 (PSADYLSFRN…YRIVHVQWKP (123 aa)) are interaction with EPM2A. In terms of domain architecture, CBM21 spans 149–257 (RNHFQKNSVC…NNEGQNYRIV (109 aa)).

Interacts with PPP1CC catalytic subunit of PP1 and associates with glycogen. Forms complexes with glycogen phosphorylase, glycogen synthase and phosphorylase kinase which is necessary for its regulation of PP1 activity. Also interacts with EPM2A/laforin. Post-translationally, ubiquitinated by NHLRC1/malin in a EPM2A/laforin-dependent manner.

Its function is as follows. Acts as a glycogen-targeting subunit for PP1 and regulates its activity. Activates glycogen synthase, reduces glycogen phosphorylase activity and limits glycogen breakdown. Dramatically increases basal and insulin-stimulated glycogen synthesis upon overexpression in a variety of cell types. The protein is Protein phosphatase 1 regulatory subunit 3C of Bos taurus (Bovine).